The sequence spans 582 residues: Formate--tetrahydrofolate ligase (582 aa).

Position 65–72 (65–72) interacts with ATP; that stretch reads TPLGEGKT.

The protein belongs to the formate--tetrahydrofolate ligase family.

The catalysed reaction is (6S)-5,6,7,8-tetrahydrofolate + formate + ATP = (6R)-10-formyltetrahydrofolate + ADP + phosphate. It participates in one-carbon metabolism; tetrahydrofolate interconversion. The protein is Formate--tetrahydrofolate ligase of Vibrio cholerae serotype O1 (strain ATCC 39315 / El Tor Inaba N16961).